The chain runs to 298 residues: Small ribosomal subunit biogenesis GTPase RsgA (298 aa).

The region spanning 67-228 (TNELIRPPIC…VADTPGFSSL (162 aa)) is the CP-type G domain. A GTP-binding site is contributed by 116-119 (TKMD). Threonine 166 carries the phosphothreonine modification. 171–179 (GQSGVGKSS) serves as a coordination point for GTP. 4 residues coordinate Zn(2+): cysteine 252, cysteine 257, histidine 259, and cysteine 265.

It belongs to the TRAFAC class YlqF/YawG GTPase family. RsgA subfamily. Monomer, but able to form dimers. Associates with 30S ribosomal subunit; a phospho-mimetic mutation increases association. Probably binds 16S rRNA. It depends on Zn(2+) as a cofactor. Post-translationally, in vitro phosphorylated mostly on Thr (with lower signal on Ser) by PrkC in the presence of poly-L-Lys or myelin basic protein, dephosphorylated by PrpC. Most in vitro phosphorylation occurs on Thr-166, in vivo phosphorylation has not been detected, but it might vary during the cell cycle.

It is found in the cytoplasm. Functionally, one of several proteins that assist in the late maturation steps of the functional core of the 30S ribosomal subunit. Helps release RbfA from mature subunits. May play a role in the assembly of ribosomal proteins into the subunit. Circularly permuted GTPase with a low level of activity and slow catalytic turnover, does not act on ATP. GTPase activity is stimulated by the presence of 30S or 70S ribosomes, phosphorylation increases stimulation. Depletion results in increased sensitivity to protein synthesis inhibitors that block the peptide channel or peptidyl transferase center on the ribosome, suggesting this protein functions in conjunction with the ribosome in vivo. Decreasing levels of protein lead to an increase in free 30S and 50S ribosomal subunits and a decrease in assembled 70S ribosomes. Suggested to serve as a specific transcription factor for proteins involved in late stages of peptidoglycan synthesis. This is Small ribosomal subunit biogenesis GTPase RsgA from Bacillus subtilis (strain 168).